Reading from the N-terminus, the 196-residue chain is Recombination protein RecR (196 aa).

The segment at 55–70 adopts a C4-type zinc-finger fold; that stretch reads CELCGNLESESPCSIC. Positions 78-173 constitute a Toprim domain; sequence DIVCVVEEIT…KLSFLAHGIP (96 aa).

This sequence belongs to the RecR family.

Its function is as follows. May play a role in DNA repair. It seems to be involved in an RecBC-independent recombinational process of DNA repair. It may act with RecF and RecO. The sequence is that of Recombination protein RecR from Neorickettsia sennetsu (strain ATCC VR-367 / Miyayama) (Ehrlichia sennetsu).